A 275-amino-acid chain; its full sequence is Adenylate kinase (275 aa).

Residue 54-59 coordinates ATP; it reads GAGKGT. Residues 74 to 103 form an NMP region; it reads ATGDMLRSQVAKKTPLGREAKKIMDQGGLV. AMP is bound by residues threonine 75, arginine 80, 101–103, 130–133, and glutamine 137; these read GLV and GFPR. The tract at residues 171–208 is LID; it reads GRLVHPASGRSYHRVFNPPKADMKDDITGEPLVSRSDD. Residues arginine 172 and 181-182 each bind ATP; that span reads SY. AMP is bound by residues arginine 205 and arginine 216. Position 244 (glutamine 244) interacts with ATP.

This sequence belongs to the adenylate kinase family. AK2 subfamily. As to quaternary structure, monomer.

It is found in the cytoplasm. Its subcellular location is the cytosol. The protein resides in the mitochondrion intermembrane space. The catalysed reaction is AMP + ATP = 2 ADP. Its function is as follows. Catalyzes the reversible transfer of the terminal phosphate group between ATP and AMP. Plays an important role in cellular energy homeostasis and in adenine nucleotide metabolism. Adenylate kinase activity is critical for regulation of the phosphate utilization and the AMP de novo biosynthesis pathways. The protein is Adenylate kinase (adk1) of Botryotinia fuckeliana (strain B05.10) (Noble rot fungus).